The primary structure comprises 574 residues: Intraflagellar transport protein 56 homolog (574 aa).

TPR repeat units lie at residues 20 to 52 (AQKMPELDDFLSNQDYEGAISLLNHKLKAGNLD), 57 to 90 (DSLQLWLAHCYYRLRNYEEAANVYTFLMNKDDAP), and 151 to 184 (LEDRLSLAGVNYSRMHYQDAIEVYTSVLQTSPNL).

Belongs to the IFT56 family. In terms of assembly, component of the IFT complex B composed of at least che-2, che-13, dyf-1, dyf-3, dyf-6, dyf-11, dyf-13, ift-20, ift-74, ift-81, ifta-2, osm-1, osm-5 and osm-6.

Its subcellular location is the cell projection. The protein localises to the cilium. Functionally, component of the intraflagellar transport (IFT) complex B required for transport of proteins in the motile cilium. May be required for ciliary entrance and transport of specific ciliary cargo proteins such as che-3 which are related to motility. This Caenorhabditis elegans protein is Intraflagellar transport protein 56 homolog.